We begin with the raw amino-acid sequence, 210 residues long: Menaquinone reductase, multiheme cytochrome c subunit (210 aa).

The helical transmembrane segment at 20–40 threads the bilayer; that stretch reads GGAAPFFVGLVVALVFGWWAF. Residues Cys-67, Cys-70, His-71, Cys-88, Cys-91, His-92, Cys-140, Cys-143, His-144, Cys-152, Cys-155, His-156, Cys-186, Cys-189, His-190, Cys-205, Cys-208, and His-209 each coordinate heme.

It belongs to the multiheme cytochrome c family. As to quaternary structure, the Qrc complex is composed of four subunits: QrcA, QrcB, QrcC and QrcD. Can form a supercomplex with the [NiFe] hydrogenase HynA1 and the tetraheme Type I cytochrome c3 TpIc(3), its physiological electron donors. Heme c is required as a cofactor.

It localises to the cell inner membrane. Functionally, component of the respiratory Qrc complex, that catalyzes the reduction of the menaquinone pool using electrons transferred from the reduced periplasmic cytochrome c3, and which is probably involved in sulfate respiration. Is likely essential for growth on H(2) or formate since the periplasmic hydrogenases and/or formate dehydrogenases act as primary electron donors for the Qrc complex. The chain is Menaquinone reductase, multiheme cytochrome c subunit from Nitratidesulfovibrio vulgaris (strain ATCC 29579 / DSM 644 / CCUG 34227 / NCIMB 8303 / VKM B-1760 / Hildenborough) (Desulfovibrio vulgaris).